We begin with the raw amino-acid sequence, 1140 residues long: MTTAAERKYINIRKRLDQLGYRQTLSVDSLPLVEKLFSDLVHTTESLRQCRLSSGKAEKESANLDFVLEPYKLENTRLNKENNELYLELMKLRECSDKHIKDLKTTLKKCSRETADLKFLNNQYVHKVKVLEKESKAKDEKIQQLQEKNLRAVVQTPGGRKRNIAFRRQRMQIDEPAPPSEVSAYPVPQPEDPYIADLLQVADNRIQELQEEVQQLQEKLAQMEKGVLDYSKQIELREREIQRLSLALDGGCSPDVLSLETRNKTNEKLIAHLNVQVDFLQQANKELEKHIQELMETKETVTTEVVNLSNRNEKLCQELTEIDQLAQRLERHKEQVLETADKELGEAKKEIKRNLCEMRNLEEKMSKLQWELDLSHKEKERLNSELLLKSDLETVVHQLEQEKQRLSKKLQSFAVTERELTLEVERMRLEHGIKRRDKSPSRLDTFLKGIEEERDYYKKELEKLQHLIQRRSCAINYSAREKPPVVKCSEKGDCSTDVHLITRERDELQRMLERFEKYMEDIQSNVKLLTAERDKLNVLYKEAKEELSTLRKESTNSTSPNHLVSCVEKEKERALSELRRITAEKEALREKLKNIQERNAVGKSDLEKTIEHLTYINHQLENEKYELQSKMLMMKETVESLENKSKLQAQKLSHVTGDSSHQKTEMTSLRIVSEQLQRSLDDCQHRLSIKRGELESAQEQIKMLEQKLENLSHRMTVQSEETHAMKKTIGVMDKEKDFLQETVDEKTEKIANLQESLLSKEKVIAQLKVTVAEYETSLNQLQETLTTRDREINSLRRQLDASHKELDDVGKSREISFKENRRLQDDLATMARENQEISLELEAAVQEKEEMKSRVHKYITEVSRWESLMAAKEKENKDLLDRFQMLHSRAEDWEVKAQQAEGENSSVRLELLSIDTERRHLRERVDLLEKEIQEHINAHHAYESQISSMAKAMSQLEEELRRHESEKATMLGDVSSLRELCIKLDSGKDVMTQQLNSKSLELERAVAELENVKSESELLKKQLTNERQTIKNLESLLATNRDKEFQSHLTSHEKDTEIQLLKEKLNLSESKLTTQSRETSMLRTKVTQLQTDYDNLKRQMSNEKYERERAIQEMRRLGLPTSPLSSTLKSPVQTPDHINA.

The interval 11 to 64 (NIRKRLDQLGYRQTLSVDSLPLVEKLFSDLVHTTESLRQCRLSSGKAEKESANL) is homodimerization. Coiled coils occupy residues 75 to 151 (NTRL…KNLR) and 199 to 416 (LQVA…FAVT). Position 439 is a phosphoserine (Ser439). Coiled coils occupy residues 447-644 (LKGI…LENK), 668-1036 (SLRI…LESL), and 1079-1113 (TSML…AIQE). At Ser688 the chain carries Phosphoserine. Low complexity predominate over residues 1117–1131 (LGLPTSPLSSTLKSP). The disordered stretch occupies residues 1117–1140 (LGLPTSPLSSTLKSPVQTPDHINA). Thr1121 carries the post-translational modification Phosphothreonine. A Phosphoserine modification is found at Ser1130. A Phosphothreonine modification is found at Thr1134.

It belongs to the CEP135/TSGA10 family. As to quaternary structure, homodimer. Interacts with CEP250. Interacts with DCTN2.

It localises to the cytoplasm. Its subcellular location is the cytoskeleton. The protein resides in the microtubule organizing center. The protein localises to the centrosome. It is found in the centriole. Centrosomal microtubule-binding protein involved in centriole biogenesis. Acts as a scaffolding protein during early centriole biogenesis. Required for the targeting of centriole satellite proteins to centrosomes such as of PCM1, SSX2IP and CEP290 and recruitment of WRAP73 to centrioles. Also required for centriole-centriole cohesion during interphase by acting as a platform protein for CEP250 at the centriole. Required for the recruitment of CEP295 to the proximal end of new-born centrioles at the centriolar microtubule wall during early S phase in a PLK4-dependent manner. In Mus musculus (Mouse), this protein is Centrosomal protein of 135 kDa (Cep135).